A 172-amino-acid polypeptide reads, in one-letter code: HTH-type transcriptional regulator IscR (172 aa).

One can recognise an HTH rrf2-type domain in the interval Arg-2–Arg-131. Positions Leu-28–Lys-51 form a DNA-binding region, H-T-H motif. [2Fe-2S] cluster-binding residues include Cys-92, Cys-98, and Cys-104.

[2Fe-2S] cluster serves as cofactor.

In terms of biological role, regulates the transcription of several operons and genes involved in the biogenesis of Fe-S clusters and Fe-S-containing proteins. This Photobacterium profundum (strain SS9) protein is HTH-type transcriptional regulator IscR.